The sequence spans 206 residues: Large ribosomal subunit protein uL22m (206 aa).

A mitochondrion-targeting transit peptide spans 1–40 (MAAAVLGQLGALWIHNLRSRGRLAWGVLPQSYVHTSASLD).

The protein belongs to the universal ribosomal protein uL22 family. As to quaternary structure, component of the mitochondrial ribosome large subunit (39S) which comprises a 16S rRNA and about 50 distinct proteins.

It localises to the mitochondrion. The protein is Large ribosomal subunit protein uL22m (MRPL22) of Pongo abelii (Sumatran orangutan).